A 108-amino-acid chain; its full sequence is Tetrahydromethanopterin S-methyltransferase subunit B (108 aa).

A helical transmembrane segment spans residues 77-99 (FQGMFFGFWVTMAVLVLVTILAV).

It belongs to the MtrB family. In terms of assembly, the complex is composed of 8 subunits; MtrA, MtrB, MtrC, MtrD, MtrE, MtrF, MtrG and MtrH.

It localises to the cell membrane. It catalyses the reaction 5-methyl-5,6,7,8-tetrahydromethanopterin + coenzyme M + 2 Na(+)(in) = 5,6,7,8-tetrahydromethanopterin + methyl-coenzyme M + 2 Na(+)(out). Its pathway is one-carbon metabolism; methanogenesis from CO(2); methyl-coenzyme M from 5,10-methylene-5,6,7,8-tetrahydromethanopterin: step 2/2. In terms of biological role, part of a complex that catalyzes the formation of methyl-coenzyme M and tetrahydromethanopterin from coenzyme M and methyl-tetrahydromethanopterin. This is an energy-conserving, sodium-ion translocating step. This Methanococcus maripaludis (strain DSM 14266 / JCM 13030 / NBRC 101832 / S2 / LL) protein is Tetrahydromethanopterin S-methyltransferase subunit B.